We begin with the raw amino-acid sequence, 737 residues long: MLKYALHSGGMPRNRLLRQLSAYIFRRSYSSNIRNIGILAHIDAGKTTTTERMLFYSGKTRSLGEVHRGNTVTDYLTQERERGITICSSAVTFPWSGNRINLLDTPGHIDFTMEVEQSLYAVDGVVVVLDGTAGVEAQTVTVWTQADKHKLPRLAFVNKMDRPDADFDKCVNDLRTKLETQPVCIQYPSKNQDGLLAINDVITLEQLTWQPKDLGRSYSKTKLEPSDDLRQLQEKRNELIDQLSGLDDELADVVISTESFDNVSNALIERALRRATCQQKVVPVLLGSAYKNVGIQRLMDAVNTYLPAPEERNQIYDCFGNEVAGKVFKIVHDKQRGPLTLVRILRGEIKRGMRLICSRGQAEVVSKLYEPLADEYREVGAVQSGDVVICAGLKSTVTGDLLTSSQTALRNAQKRLKQSQGTVSADEDEELDTDELFGIDRQIPDAVYFCSIEPPSVSSQTAMEQALRQLQREDPSLRVSYDSVTGQTVLGGMGELHMDIIKSRILSEYKIDVDLGPLQIAYKETIESPSLTTLSVEKEIAGSKQNVSLTLEVVKDHDELFSLDKSPENLSNLNTLRPRTLQVIRKGSVSALERGPRVGGQVVDTQIRLHNAIIGRGTADSFVMATAAQCVQKLLSTSGTRLLEPIMALQIVAPSERISGIMADLSRRRALINDVLPKGERNKMILVNAPLAELSGYSSALRTISSGTASMTMQPSGFSGMNAVDESLAERRVQGLE.

The N-terminal 29 residues, 1–29 (MLKYALHSGGMPRNRLLRQLSAYIFRRSY), are a transit peptide targeting the mitochondrion. One can recognise a tr-type G domain in the interval 31–310 (SNIRNIGILA…AVNTYLPAPE (280 aa)). Residues 40–47 (AHIDAGKT), 104–108 (DTPGH), and 158–161 (NKMD) each bind GTP.

Belongs to the TRAFAC class translation factor GTPase superfamily. Classic translation factor GTPase family. EF-G/EF-2 subfamily.

It is found in the mitochondrion. In terms of biological role, mitochondrial GTPase that mediates the disassembly of ribosomes from messenger RNA at the termination of mitochondrial protein biosynthesis. Not involved in the GTP-dependent ribosomal translocation step during translation elongation. The sequence is that of Ribosome-releasing factor 2, mitochondrial from Drosophila persimilis (Fruit fly).